The sequence spans 354 residues: Protein RecA (354 aa).

67–74 provides a ligand contact to ATP; it reads GPESSGKT.

Belongs to the RecA family.

It localises to the cytoplasm. Can catalyze the hydrolysis of ATP in the presence of single-stranded DNA, the ATP-dependent uptake of single-stranded DNA by duplex DNA, and the ATP-dependent hybridization of homologous single-stranded DNAs. It interacts with LexA causing its activation and leading to its autocatalytic cleavage. This Serratia marcescens protein is Protein RecA.